A 178-amino-acid chain; its full sequence is ATP-dependent protease subunit HslV (178 aa).

The active site involves Thr7. The Na(+) site is built by Gly162, Cys165, and Thr168.

Belongs to the peptidase T1B family. HslV subfamily. As to quaternary structure, a double ring-shaped homohexamer of HslV is capped on each side by a ring-shaped HslU homohexamer. The assembly of the HslU/HslV complex is dependent on binding of ATP.

It localises to the cytoplasm. The catalysed reaction is ATP-dependent cleavage of peptide bonds with broad specificity.. Its activity is regulated as follows. Allosterically activated by HslU binding. Protease subunit of a proteasome-like degradation complex believed to be a general protein degrading machinery. This is ATP-dependent protease subunit HslV from Burkholderia cenocepacia (strain ATCC BAA-245 / DSM 16553 / LMG 16656 / NCTC 13227 / J2315 / CF5610) (Burkholderia cepacia (strain J2315)).